The following is a 945-amino-acid chain: Kinesin-like protein KIN-7F (945 aa).

In terms of domain architecture, Kinesin motor spans 34–356; the sequence is RILVSVRLRP…LLFASCAKEV (323 aa). 120–127 is a binding site for ATP; that stretch reads GQTSSGKT. The stretch at 365-437 forms a coiled coil; sequence VMSDKALVKQ…QDLLQVVGDN (73 aa). 2 disordered regions span residues 484–512 and 553–588; these read RRVA…SVSS and NECL…MNSR. Polar residues-rich tracts occupy residues 495–512 and 560–587; these read QAEN…SVSS and AVGS…SMNS.

Belongs to the TRAFAC class myosin-kinesin ATPase superfamily. Kinesin family. KIN-7 subfamily. In terms of assembly, binds microtubules.

Binds ATP/ADP in vitro. Possesses low ATPase activity but high affinity for microtubules. In Oryza sativa subsp. japonica (Rice), this protein is Kinesin-like protein KIN-7F.